The primary structure comprises 83 residues: Cytochrome b559 subunit alpha (83 aa).

The helical transmembrane segment at 21–35 threads the bilayer; sequence VIHSITIPSLFIAGW. Heme is bound at residue His23.

It belongs to the PsbE/PsbF family. In terms of assembly, heterodimer of an alpha subunit and a beta subunit. PSII is composed of 1 copy each of membrane proteins PsbA, PsbB, PsbC, PsbD, PsbE, PsbF, PsbH, PsbI, PsbJ, PsbK, PsbL, PsbM, PsbT, PsbX, PsbY, PsbZ, Psb30/Ycf12, at least 3 peripheral proteins of the oxygen-evolving complex and a large number of cofactors. It forms dimeric complexes. Heme b serves as cofactor.

The protein localises to the plastid. It localises to the chloroplast thylakoid membrane. Functionally, this b-type cytochrome is tightly associated with the reaction center of photosystem II (PSII). PSII is a light-driven water:plastoquinone oxidoreductase that uses light energy to abstract electrons from H(2)O, generating O(2) and a proton gradient subsequently used for ATP formation. It consists of a core antenna complex that captures photons, and an electron transfer chain that converts photonic excitation into a charge separation. The sequence is that of Cytochrome b559 subunit alpha from Phalaenopsis aphrodite subsp. formosana (Moth orchid).